A 427-amino-acid chain; its full sequence is Enolase (427 aa).

Residue glutamine 163 participates in (2R)-2-phosphoglycerate binding. Glutamate 205 serves as the catalytic Proton donor. Residues aspartate 242, glutamate 285, and aspartate 312 each contribute to the Mg(2+) site. (2R)-2-phosphoglycerate contacts are provided by lysine 337, arginine 366, serine 367, and lysine 388. Lysine 337 functions as the Proton acceptor in the catalytic mechanism.

This sequence belongs to the enolase family. It depends on Mg(2+) as a cofactor.

It is found in the cytoplasm. The protein resides in the secreted. Its subcellular location is the cell surface. It carries out the reaction (2R)-2-phosphoglycerate = phosphoenolpyruvate + H2O. It functions in the pathway carbohydrate degradation; glycolysis; pyruvate from D-glyceraldehyde 3-phosphate: step 4/5. Functionally, catalyzes the reversible conversion of 2-phosphoglycerate (2-PG) into phosphoenolpyruvate (PEP). It is essential for the degradation of carbohydrates via glycolysis. The sequence is that of Enolase from Ralstonia nicotianae (strain ATCC BAA-1114 / GMI1000) (Ralstonia solanacearum).